Reading from the N-terminus, the 847-residue chain is Vacuolar membrane protease (847 aa).

The Cytoplasmic segment spans residues 1 to 17 (MQFGKSLLKHVYTRTFK). A helical transmembrane segment spans residues 18–38 (SSLTCSIFAFTLLMIFFVLDW). The Vacuolar segment spans residues 39 to 348 (KRMNVYPRLD…GSYWQINLNL (310 aa)). Zn(2+) contacts are provided by His-146 and Asp-158. Residue Glu-190 is the Proton acceptor of the active site. Glu-191 is a binding site for Zn(2+). The N-linked (GlcNAc...) asparagine glycan is linked to Asn-208. Glu-216 provides a ligand contact to Zn(2+). A glycan (N-linked (GlcNAc...) asparagine) is linked at Asn-274. Zn(2+) is bound at residue His-291. A helical transmembrane segment spans residues 349–369 (HLFLNVVFLIACPAILFMCLF). At 370–381 (RFPSLYAQLKKP) the chain is on the cytoplasmic side. Residues 382–402 (CYLICFTLSSLFVLIFDYVVV) traverse the membrane as a helical segment. Over 403-415 (QSLTKLNPYVIHS) the chain is Vacuolar. Residues 416–436 (SPDAVLAFFFLTNLLGLVYSF) form a helical membrane-spanning segment. Residues 437–454 (RYVATHSRMSNEELSCIE) lie on the Cytoplasmic side of the membrane. The chain crosses the membrane as a helical span at residues 455–475 (IVLIWYVSMFWYISLLIATLT). Topologically, residues 476-482 (SIVRGLG) are vacuolar. Residues 483–503 (SLYFVNFGFFCSFFCCILTLI) form a helical membrane-spanning segment. The Cytoplasmic segment spans residues 504 to 560 (RVRYFVDRMVTINRPANPEQMPLVQSTSGNAYGTSRYPQHRLKAVVSKSASVKLNDN). A helical transmembrane segment spans residues 561–581 (LWSVLFFSCLVPLPLFTCYNL). The Vacuolar portion of the chain corresponds to 582 to 605 (LSEVFIPAVHQSLIDGPYSNTCYK). Residues 606-626 (FAVILVFMAIINSSPFVFRAL) traverse the membrane as a helical segment. The Cytoplasmic portion of the chain corresponds to 627-630 (SKKS). A helical membrane pass occupies residues 631–651 (SAILLMLWVSLLFNILRAEPF). At 652 to 847 (NEKAPIKFRV…LLKMSKTHVM (196 aa)) the chain is on the vacuolar side. N-linked (GlcNAc...) asparagine glycans are attached at residues Asn-726, Asn-734, Asn-800, and Asn-834.

This sequence belongs to the peptidase M28 family. The cofactor is Zn(2+).

Its subcellular location is the vacuole membrane. Functionally, may be involved in vacuolar sorting and osmoregulation. In Schizosaccharomyces japonicus (strain yFS275 / FY16936) (Fission yeast), this protein is Vacuolar membrane protease.